A 153-amino-acid chain; its full sequence is Ribosomal RNA large subunit methyltransferase H (153 aa).

S-adenosyl-L-methionine-binding positions include I75, G103, and 121 to 126; that span reads LSAMTF.

The protein belongs to the RNA methyltransferase RlmH family. As to quaternary structure, homodimer.

The protein localises to the cytoplasm. The enzyme catalyses pseudouridine(1915) in 23S rRNA + S-adenosyl-L-methionine = N(3)-methylpseudouridine(1915) in 23S rRNA + S-adenosyl-L-homocysteine + H(+). In terms of biological role, specifically methylates the pseudouridine at position 1915 (m3Psi1915) in 23S rRNA. In Helicobacter hepaticus (strain ATCC 51449 / 3B1), this protein is Ribosomal RNA large subunit methyltransferase H.